The primary structure comprises 556 residues: 2,3-bisphosphoglycerate-independent phosphoglycerate mutase (556 aa).

2 residues coordinate Mn(2+): Asp-25 and Ser-78. Ser-78 serves as the catalytic Phosphoserine intermediate. Substrate contacts are provided by residues His-137, 167-168, Arg-203, Arg-210, 283-286, and Lys-358; these read RD and RADR. Mn(2+) contacts are provided by Asp-427, His-431, Asp-468, His-469, and His-498.

It belongs to the BPG-independent phosphoglycerate mutase family. In terms of assembly, monomer. It depends on Mn(2+) as a cofactor. As to expression, found ubiquitously in germinating seed.

Its subcellular location is the cytoplasm. It catalyses the reaction (2R)-2-phosphoglycerate = (2R)-3-phosphoglycerate. The protein operates within carbohydrate degradation; glycolysis; pyruvate from D-glyceraldehyde 3-phosphate: step 3/5. Catalyzes the interconversion of 2-phosphoglycerate and 3-phosphoglycerate. In Ricinus communis (Castor bean), this protein is 2,3-bisphosphoglycerate-independent phosphoglycerate mutase.